The primary structure comprises 362 residues: Talin rod domain-containing protein 1 (362 aa).

Residues 1-27 form a disordered region; the sequence is MASGSAGKPTGEAASPAPGSAVGGASS. Position 2 is an N-acetylalanine (A2). Residues 9 to 27 show a composition bias toward low complexity; the sequence is PTGEAASPAPGSAVGGASS.

As to quaternary structure, may homodimerize. Interacts with F-actin. As to expression, ubiquitous.

Actin-binding protein which may have an oncogenic function and regulates cell proliferation, migration and invasion in cancer cells. The polypeptide is Talin rod domain-containing protein 1 (Mus musculus (Mouse)).